The chain runs to 233 residues: MNKILLQCDNLCKRYQEGSVQTDVLHNVSFSVSEGEMMAIVGSSGSGKSTLLHLLGGLDTPTSGDVIFNGQPMSKLSSAAKAELRNQKLGFIYQFHHLLPDFTALENVAMPLLIGKKKPAEINSRALEMLKAVGLDHRANHRPSELSGGERQRVAIARALVNNPRLVLADEPTGNLDARNADSIFQLLGELNRLQGTAFLVVTHDLQLAKRMSRQLEMRDGRLTAELSLMGAE.

The ABC transporter domain maps to 6-233 (LQCDNLCKRY…TAELSLMGAE (228 aa)). 42–49 (GSSGSGKS) contacts ATP.

The protein belongs to the ABC transporter superfamily. Lipoprotein translocase (TC 3.A.1.125) family. The complex is composed of two ATP-binding proteins (LolD) and two transmembrane proteins (LolC and LolE).

The protein resides in the cell inner membrane. Functionally, part of the ABC transporter complex LolCDE involved in the translocation of mature outer membrane-directed lipoproteins, from the inner membrane to the periplasmic chaperone, LolA. Responsible for the formation of the LolA-lipoprotein complex in an ATP-dependent manner. The protein is Lipoprotein-releasing system ATP-binding protein LolD of Shigella dysenteriae serotype 1 (strain Sd197).